A 370-amino-acid polypeptide reads, in one-letter code: UDP-N-acetylglucosamine--N-acetylmuramyl-(pentapeptide) pyrophosphoryl-undecaprenol N-acetylglucosamine transferase (370 aa).

UDP-N-acetyl-alpha-D-glucosamine-binding positions include 14–16, asparagine 125, arginine 168, serine 196, and glutamine 297; that span reads TGG.

Belongs to the glycosyltransferase 28 family. MurG subfamily.

Its subcellular location is the cell inner membrane. It carries out the reaction di-trans,octa-cis-undecaprenyl diphospho-N-acetyl-alpha-D-muramoyl-L-alanyl-D-glutamyl-meso-2,6-diaminopimeloyl-D-alanyl-D-alanine + UDP-N-acetyl-alpha-D-glucosamine = di-trans,octa-cis-undecaprenyl diphospho-[N-acetyl-alpha-D-glucosaminyl-(1-&gt;4)]-N-acetyl-alpha-D-muramoyl-L-alanyl-D-glutamyl-meso-2,6-diaminopimeloyl-D-alanyl-D-alanine + UDP + H(+). Its pathway is cell wall biogenesis; peptidoglycan biosynthesis. Its function is as follows. Cell wall formation. Catalyzes the transfer of a GlcNAc subunit on undecaprenyl-pyrophosphoryl-MurNAc-pentapeptide (lipid intermediate I) to form undecaprenyl-pyrophosphoryl-MurNAc-(pentapeptide)GlcNAc (lipid intermediate II). The chain is UDP-N-acetylglucosamine--N-acetylmuramyl-(pentapeptide) pyrophosphoryl-undecaprenol N-acetylglucosamine transferase from Nitrobacter hamburgensis (strain DSM 10229 / NCIMB 13809 / X14).